We begin with the raw amino-acid sequence, 445 residues long: ATP-dependent rRNA helicase rrp3 (445 aa).

The span at 1-10 (MSKNSSRDSS) shows a compositional bias: basic and acidic residues. The segment at 1 to 28 (MSKNSSRDSSPEEVSPDTETPSTTTAPK) is disordered. Over residues 17–28 (DTETPSTTTAPK) the composition is skewed to low complexity. The Q motif motif lies at 28 to 56 (KTFRELGVIDSLCEACEELGYTAPTPIQE). A Helicase ATP-binding domain is found at 59-229 (IPIALEGRDL…RASLSDPVRV (171 aa)). 72–79 (AETGSGKT) contributes to the ATP binding site. Positions 178-181 (DEAD) match the DEAD box motif. The Helicase C-terminal domain occupies 240-400 (KLLQSYLFIP…EYKPEKDEVM (161 aa)). Positions 415–445 (LTMRDMQDKDNKGRGPRNRKRTRDDLDQDDG) are disordered.

The protein belongs to the DEAD box helicase family. DDX47/RRP3 subfamily. In terms of assembly, interacts with the SSU processome.

The protein resides in the nucleus. It catalyses the reaction ATP + H2O = ADP + phosphate + H(+). Functionally, ATP-dependent rRNA helicase required for pre-ribosomal RNA processing. Involved in the maturation of the 35S-pre-rRNA and to its cleavage to mature 18S rRNA. This chain is ATP-dependent rRNA helicase rrp3, found in Aspergillus terreus (strain NIH 2624 / FGSC A1156).